Consider the following 669-residue polypeptide: DNA mismatch repair protein MutL (669 aa).

The disordered stretch occupies residues 356-377 (FEQRQNTENNQEKTFSSEESNS). Over residues 361 to 377 (NTENNQEKTFSSEESNS) the composition is skewed to polar residues.

This sequence belongs to the DNA mismatch repair MutL/HexB family.

This protein is involved in the repair of mismatches in DNA. It is required for dam-dependent methyl-directed DNA mismatch repair. May act as a 'molecular matchmaker', a protein that promotes the formation of a stable complex between two or more DNA-binding proteins in an ATP-dependent manner without itself being part of a final effector complex. The sequence is that of DNA mismatch repair protein MutL from Staphylococcus aureus (strain MSSA476).